The chain runs to 338 residues: Fructose-1,6-bisphosphatase class 1 (338 aa).

Mg(2+) is bound by residues glutamate 90, aspartate 112, leucine 114, and aspartate 115. Residues 115-118 (DGSS), asparagine 207, and lysine 273 each bind substrate. Residue glutamate 279 coordinates Mg(2+).

It belongs to the FBPase class 1 family. As to quaternary structure, homotetramer. Requires Mg(2+) as cofactor.

It localises to the cytoplasm. It catalyses the reaction beta-D-fructose 1,6-bisphosphate + H2O = beta-D-fructose 6-phosphate + phosphate. It participates in carbohydrate biosynthesis; gluconeogenesis. The chain is Fructose-1,6-bisphosphatase class 1 from Stenotrophomonas maltophilia (strain R551-3).